The following is a 363-amino-acid chain: MSVMVVRKKVTRKWEKLPGRNTFCCDGRVMMARQKGIFYLTLFLILGTCTLFFAFECRYLAVQLSPAIPVFAAMLFLFSMATLLRTSFSDPGVIPRALPDEAAFIEMEIEATNGAVPQGQRPPPRIKNFQINNQIVKLKYCYTCKIFRPPRASHCSICDNCVERFDHHCPWVGNCVGKRNYRYFYLFILSLSLLTIYVFAFNIVYVALKSLKIGFLETLKETPGTVLEVLICFFTLWSVVGLTGFHTFLVALNQTTNEDIKGSWTGKNRVQNPYSHGNIVKNCCEVLCGPLPPSVLDRRGILPLEESGSRPPSTQEASTSLLPQGPAPIDHLSNEMPEDTSTPEEMPPPEPPEPPQEVTEAEK.

Topologically, residues 1–35 (MSVMVVRKKVTRKWEKLPGRNTFCCDGRVMMARQK) are cytoplasmic. The helical transmembrane segment at 36-56 (GIFYLTLFLILGTCTLFFAFE) threads the bilayer. Residues 57-63 (CRYLAVQ) lie on the Lumenal side of the membrane. A helical membrane pass occupies residues 64 to 84 (LSPAIPVFAAMLFLFSMATLL). Residues 85–183 (RTSFSDPGVI…NCVGKRNYRY (99 aa)) are Cytoplasmic-facing. One can recognise a DHHC domain in the interval 139–189 (KYCYTCKIFRPPRASHCSICDNCVERFDHHCPWVGNCVGKRNYRYFYLFIL). The S-palmitoyl cysteine intermediate role is filled by Cys-169. The helical transmembrane segment at 184–204 (FYLFILSLSLLTIYVFAFNIV) threads the bilayer. The Lumenal portion of the chain corresponds to 205–228 (YVALKSLKIGFLETLKETPGTVLE). The chain crosses the membrane as a helical span at residues 229–249 (VLICFFTLWSVVGLTGFHTFL). The Cytoplasmic portion of the chain corresponds to 250-363 (VALNQTTNED…PPQEVTEAEK (114 aa)). The interval 303-363 (PLEESGSRPP…PPQEVTEAEK (61 aa)) is disordered. A compositionally biased stretch (polar residues) spans 310–322 (RPPSTQEASTSLL). Positions 345 to 355 (EMPPPEPPEPP) are enriched in pro residues.

This sequence belongs to the DHHC palmitoyltransferase family. ERF2/ZDHHC9 subfamily. As to quaternary structure, interacts with GOLGA7.

Its subcellular location is the endoplasmic reticulum membrane. The protein localises to the golgi apparatus membrane. It carries out the reaction L-cysteinyl-[protein] + hexadecanoyl-CoA = S-hexadecanoyl-L-cysteinyl-[protein] + CoA. Palmitoyltransferase that catalyzes the addition of palmitate onto various protein substrates, such as ADRB2, GSDMD, HRAS, NRAS and CGAS. The ZDHHC9-GOLGA7 complex is a palmitoyltransferase specific for HRAS and NRAS. May have a palmitoyltransferase activity toward the beta-2 adrenergic receptor/ADRB2 and therefore regulate G protein-coupled receptor signaling. Acts as a regulator of innate immunity by catalyzing palmitoylation of CGAS, thereby promoting CGAS homodimerization and cyclic GMP-AMP synthase activity. Activates pyroptosis by catalyzing palmitoylation of gasdermin-D (GSDMD), thereby promoting membrane translocation and pore formation of GSDMD. This Bos taurus (Bovine) protein is Palmitoyltransferase ZDHHC9 (ZDHHC9).